The following is a 361-amino-acid chain: NudC domain-containing protein 3 (361 aa).

Positions 87–97 (KIRRKEEEEAK) are enriched in basic and acidic residues. 2 disordered regions span residues 87–106 (KIRRKEEEEAKTVSAAAAEK) and 124–158 (LDGHQEVEKVQPPGPVKEMAHGSQEAEAPGAVAGA). Ser146 carries the phosphoserine modification. Low complexity predominate over residues 148-158 (EAEAPGAVAGA). The CS domain occupies 185-277 (AVRENYTWSQ…VGEYWWNAIL (93 aa)). A phosphoserine mark is found at Ser340 and Ser355.

This Homo sapiens (Human) protein is NudC domain-containing protein 3 (NUDCD3).